The primary structure comprises 1963 residues: Immunoglobulin A1 protease (1963 aa).

A signal peptide spans methionine 1–alanine 36. A propeptide spanning residues serine 37 to threonine 99 is cleaved from the precursor. An LPXTG sorting signal motif is present at residues leucine 96–glycine 100. Threonine 99 is subject to Pentaglycyl murein peptidoglycan amidated threonine. Transmembrane regions (helical) follow at residues glutamine 106–serine 125 and lysine 132–leucine 154. Residues glutamate 155–lysine 1963 are Extracellular-facing. A disordered region spans residues lysine 253–aspartate 305. Positions leucine 276–threonine 296 are enriched in basic and acidic residues. In terms of domain architecture, G5 spans lysine 314–lysine 393. The segment at glutamate 402–glutamate 681 is disordered. Tandem repeats lie at residues alanine 419–proline 435, glutamate 436–threonine 452, and glutamate 453–proline 469. A 3 X 17 AA approximate tandem repeats region spans residues alanine 419–proline 469. Basic and acidic residues predominate over residues valine 485–glutamate 511. Composition is skewed to polar residues over residues asparagine 516 to glutamate 529 and glutamate 538 to glutamate 572. The span at asparagine 574 to glutamate 591 shows a compositional bias: basic and acidic residues. 2 stretches are compositionally biased toward polar residues: residues glutamate 618–proline 639 and glutamate 648–threonine 674. Zn(2+) is bound at residue histidine 1604. The active site involves glutamate 1605. Residues histidine 1608 and glutamate 1628 each contribute to the Zn(2+) site.

Belongs to the peptidase M26 family. Zn(2+) is required as a cofactor. The Gram-positive cell-wall anchor motif LPXTG is located in the N-terminal part, in contrast to such motifs in other known streptococcal and staphylococcal proteins. The protease could be cleaved by the sortase and anchored in the membrane via the two potential N-terminal transmembrane domains, whereas the propeptide located prior to the LPXTG motif would remain attached to the cell wall peptidoglycan by an amide bond.

Its subcellular location is the secreted. The protein localises to the cell wall. It localises to the membrane. The enzyme catalyses Cleavage of Pro-|-Thr bond in the hinge region of the heavy chain of human IgA.. Functionally, zinc metalloproteinase which cleaves human immunoglobulin A1 (IgA1) in the hinge region. This chain is Immunoglobulin A1 protease (iga), found in Streptococcus pneumoniae (strain ATCC BAA-255 / R6).